A 115-amino-acid polypeptide reads, in one-letter code: NADH-ubiquinone oxidoreductase chain 3 (115 aa).

The next 3 helical transmembrane spans lie at 3–23 (FALILMINTLLALLLMIITFW), 55–75 (FFLVAITFLLFDLEIALLLPL), and 84–104 (LPLMVMSSLLLIIILALSLAY).

This sequence belongs to the complex I subunit 3 family. In terms of assembly, core subunit of respiratory chain NADH dehydrogenase (Complex I) which is composed of 45 different subunits. Interacts with TMEM186. Interacts with TMEM242.

The protein localises to the mitochondrion inner membrane. It carries out the reaction a ubiquinone + NADH + 5 H(+)(in) = a ubiquinol + NAD(+) + 4 H(+)(out). In terms of biological role, core subunit of the mitochondrial membrane respiratory chain NADH dehydrogenase (Complex I) which catalyzes electron transfer from NADH through the respiratory chain, using ubiquinone as an electron acceptor. Essential for the catalytic activity of complex I. This is NADH-ubiquinone oxidoreductase chain 3 from Homo sapiens (Human).